The chain runs to 393 residues: Putative odorant receptor 69a, isoform A (393 aa).

The Cytoplasmic segment spans residues Met-1–Arg-39. The chain crosses the membrane as a helical span at residues Ile-40 to Trp-60. Residues Tyr-61–Gln-76 are Extracellular-facing. Residues Leu-77 to Ile-97 traverse the membrane as a helical segment. Over Ser-98–Glu-139 the chain is Cytoplasmic. The chain crosses the membrane as a helical span at residues Phe-140 to Trp-160. Topologically, residues Glu-161 to Gly-189 are extracellular. The helical transmembrane segment at Phe-190–Val-210 threads the bilayer. The Cytoplasmic portion of the chain corresponds to Thr-211–Asn-269. A helical membrane pass occupies residues Phe-270–Ile-290. Topologically, residues Met-291–Gly-304 are extracellular. The helical transmembrane segment at Leu-305–Ala-325 threads the bilayer. The Cytoplasmic portion of the chain corresponds to Ser-326–Tyr-365. The chain crosses the membrane as a helical span at residues Lys-366–Phe-386. The Extracellular segment spans residues Thr-387–Lys-393.

It belongs to the insect chemoreceptor superfamily. Heteromeric odorant receptor channel (TC 1.A.69) family. Or49a subfamily. As to quaternary structure, interacts with Orco. Complexes exist early in the endomembrane system in olfactory sensory neurons (OSNs), coupling these complexes to the conserved ciliary trafficking pathway. In terms of tissue distribution, expressed in olfactory sensory neurons in the antenna.

It localises to the cell membrane. Odorant receptor which mediates acceptance or avoidance behavior, depending on its substrates. The odorant receptor repertoire encodes a large collection of odor stimuli that vary widely in identity, intensity, and duration. May form a complex with Orco to form odorant-sensing units, providing sensitive and prolonged odorant signaling and calcium permeability. The sequence is that of Putative odorant receptor 69a, isoform A (Or69a) from Drosophila melanogaster (Fruit fly).